The sequence spans 169 residues: Biogenesis of lysosome-related organelles complex 1 subunit 4 (169 aa).

The protein belongs to the BLOC1S4 family. As to quaternary structure, component of the biogenesis of lysosome-related organelles complex-1 (BLOC-1) composed of Blos1, Blos2, Blos3, Blos4, Dysb, Muted, Pldn and Snapin. Interacts with Pldn.

In terms of biological role, component of the biogenesis of lysosome-related organelles complex-1 (BLOC-1) involved in pigment granule biogenesis. In Drosophila melanogaster (Fruit fly), this protein is Biogenesis of lysosome-related organelles complex 1 subunit 4.